A 603-amino-acid chain; its full sequence is Aspartate--tRNA(Asp/Asn) ligase (603 aa).

Positions Gln205–Lys208 are aspartate. Arg227 provides a ligand contact to L-aspartate. Residues Arg227–Glu229 and Gln236 each bind ATP. L-aspartate is bound at residue His463. Glu497 contacts ATP. An L-aspartate-binding site is contributed by Arg504. Position 549–552 (Gly549–Arg552) interacts with ATP.

It belongs to the class-II aminoacyl-tRNA synthetase family. Type 1 subfamily. In terms of assembly, homodimer.

The protein resides in the cytoplasm. It carries out the reaction tRNA(Asx) + L-aspartate + ATP = L-aspartyl-tRNA(Asx) + AMP + diphosphate. Its function is as follows. Aspartyl-tRNA synthetase with relaxed tRNA specificity since it is able to aspartylate not only its cognate tRNA(Asp) but also tRNA(Asn). Reaction proceeds in two steps: L-aspartate is first activated by ATP to form Asp-AMP and then transferred to the acceptor end of tRNA(Asp/Asn). The protein is Aspartate--tRNA(Asp/Asn) ligase of Anaeromyxobacter sp. (strain K).